Consider the following 525-residue polypeptide: ALBINO3-like protein 2, chloroplastic (525 aa).

4 helical membrane-spanning segments follow: residues 99–119, 167–187, 217–237, and 262–282; these read WMIIASSTVAVRLALLPLLIL, LWFFPYLSVQLPCFFLLMASI, FGPVFPILIATFHYINIQISF, and ILSVPLFFVGYAIPQGSLVYW. TPR repeat units lie at residues 346-379, 380-413, 425-458, and 467-500; these read PEELLSLSVQVLSKGDKETSIQLLRLALEKDPGY, VRGLVLMGQALLQKTQLSEATEYLELAISKLLDE, MLASQWAGAAYVQQGKLKSGIIHLERVAKLREPG, and FEALLLLSSALYKEGQSDEAAKILRVVVDHNPAY.

This sequence belongs to the OXA1/ALB3/YidC (TC 2.A.9.2) family.

It is found in the plastid. Its subcellular location is the chloroplast thylakoid membrane. Probably required for the insertion of integral membrane proteins into the chloroplast thylakoid membranes. The protein is ALBINO3-like protein 2, chloroplastic (ALB3L2) of Arabidopsis thaliana (Mouse-ear cress).